Reading from the N-terminus, the 83-residue chain is Small ribosomal subunit protein bS16 (83 aa).

Belongs to the bacterial ribosomal protein bS16 family.

This chain is Small ribosomal subunit protein bS16, found in Cupriavidus taiwanensis (strain DSM 17343 / BCRC 17206 / CCUG 44338 / CIP 107171 / LMG 19424 / R1) (Ralstonia taiwanensis (strain LMG 19424)).